We begin with the raw amino-acid sequence, 473 residues long: Cysteine--tRNA ligase (473 aa).

Residue Cys30 coordinates Zn(2+). Positions 32–42 (MTVYDYCHIGH) match the 'HIGH' region motif. Residues Cys213, His238, and Glu242 each coordinate Zn(2+). The 'KMSKS' region motif lies at 270 to 274 (KMSKS). Residue Lys273 coordinates ATP.

The protein belongs to the class-I aminoacyl-tRNA synthetase family. In terms of assembly, monomer. Requires Zn(2+) as cofactor.

It is found in the cytoplasm. It carries out the reaction tRNA(Cys) + L-cysteine + ATP = L-cysteinyl-tRNA(Cys) + AMP + diphosphate. The chain is Cysteine--tRNA ligase from Acinetobacter baumannii (strain AB307-0294).